The chain runs to 749 residues: Phototropin (749 aa).

Residues 7 to 80 (PASQLTKVLA…QKIRDAIKKG (74 aa)) form the PAS 1 domain. Residues 56 to 61 (NCRFLQ), arginine 74, asparagine 89, asparagine 99, and glutamine 120 each bind FMN. Cysteine 57 bears the S-4a-FMN cysteine mark. The PAC 1 domain maps to 81 to 135 (EACSVRLLNYRKDGTPFWNLLTVTPIKTPDGRVSKFVGVQVDVTSKTEGKALADN). In terms of domain architecture, PAS 2 spans 200–273 (VALDLATTVE…DQIRAAIKEG (74 aa)). The region spanning 274-328 (SELTVRILNYTKAGKAFWNMFTLAPMRDQDGHARFFVGVQVDVTAQSTSPDKAPV) is the PAC 2 domain. The region spanning 404–712 (FRRVKQLGAG…ANEIKSHPWF (309 aa)) is the Protein kinase domain. Residues 410–418 (LGAGDVGLV) and lysine 433 each bind ATP. Aspartate 529 acts as the Proton acceptor in catalysis. 2 disordered regions span residues 563 to 591 (KIGGAGAAGGSAPKSPKKSSSKSGGSSSG) and 729 to 749 (PRRASKAAGGSSTGGAAFDNY). The AGC-kinase C-terminal domain maps to 713–749 (KGINWALLRHQQPPYVPRRASKAAGGSSTGGAAFDNY). The span at 734-749 (KAAGGSSTGGAAFDNY) shows a compositional bias: low complexity.

This sequence belongs to the protein kinase superfamily. AGC Ser/Thr protein kinase family. The cofactor is FMN. Autophosphorylated in response to blue light irradiation. In terms of processing, 2 molecules of FMN bind covalently to cysteines after exposure to blue light and are reversed in the dark. As to expression, expressed in gametes, pre-gametes and gametes generated by pre-gametes (at protein level).

It localises to the membrane. It carries out the reaction L-seryl-[protein] + ATP = O-phospho-L-seryl-[protein] + ADP + H(+). The catalysed reaction is L-threonyl-[protein] + ATP = O-phospho-L-threonyl-[protein] + ADP + H(+). Protein kinase that acts as a blue light photoreceptor. Required for non-photochemical quenching (NPQ), a mechanism that converts and dissipates the harmful excess absorbed light energy into heat and protect the photosynthetic apparatus from photo-oxidative damage. Controls the energy-dependent chlorophyll fluorescence quenching (qE) activity of chlorophyll excited states by inducing the expression of the qE effector protein LHCSR3 in high light intensities. The sequence is that of Phototropin from Chlamydomonas reinhardtii (Chlamydomonas smithii).